We begin with the raw amino-acid sequence, 295 residues long: Acetaldehyde dehydrogenase (295 aa).

11–14 (SGNI) is an NAD(+) binding site. C127 acts as the Acyl-thioester intermediate in catalysis. NAD(+)-binding positions include 158-166 (SAGPGTRSN) and N269.

It belongs to the acetaldehyde dehydrogenase family.

It carries out the reaction acetaldehyde + NAD(+) + CoA = acetyl-CoA + NADH + H(+). This chain is Acetaldehyde dehydrogenase, found in Brevibacillus brevis (strain 47 / JCM 6285 / NBRC 100599).